A 432-amino-acid chain; its full sequence is MKFTLVATVLLTFSLSAFAVEYPVLTIASPDQVGFDSQKLHRLDGWIQNQIDAGYPSINLLVIKDNHIVLQKAWGYAKKYDGSTLLAHPIRATTNTMYDLASNTKMYATNFALQKLVYEGKIDVNDLVSKYIPGFKDMPGDKIKGKDKLRIIDILHHVAGFPADPQYPNKNVAGKLFSQSKSTTLEMIKKTPLEYQPGSKHIYSDVDYMILGFIIESITAMPLDRYVETTIYKPLGLKHTVFNPLMKGFTPPQIAATELHGNTRDGVIHFPNIRTNTLWGQVHDEKAWYSMGGVSGHAGLFSDTHDMAVLMQVMLNGGGYGNLKLFDDKTVAQFTRHSPEDATFGLGWRVNGNASMTPTFGVLASPQTYGHTGWTGTLTSIDPVNHMAIVILGNRPHSPVANPKVNPNVFVSGLLPAATYGWIVDQIYGSLK.

The helical; Signal-anchor transmembrane segment at 7-25 (ATVLLTFSLSAFAVEYPVL) threads the bilayer.

This sequence belongs to the peptidase S12 family. YfeW subfamily.

The protein localises to the cell inner membrane. The catalysed reaction is Preferential cleavage: (Ac)2-L-Lys-D-Ala-|-D-Ala. Also transpeptidation of peptidyl-alanyl moieties that are N-acyl substituents of D-alanine.. The chain is Putative D-alanyl-D-alanine carboxypeptidase from Salmonella enteritidis PT4 (strain P125109).